Here is a 342-residue protein sequence, read N- to C-terminus: Isopentenyl-diphosphate delta-isomerase (342 aa).

Position 11-12 (11-12) interacts with substrate; sequence RK. FMN is bound by residues Ser68, 69–71, Ser99, and Asn127; that span reads SMT. 99 to 101 serves as a coordination point for substrate; it reads SMR. Position 162 (Gln162) interacts with substrate. Glu163 contributes to the Mg(2+) binding site. FMN contacts are provided by residues Lys194, Thr224, 274–276, and 295–296; these read GLK and AG.

Belongs to the IPP isomerase type 2 family. Homooctamer. Dimer of tetramers. FMN serves as cofactor. The cofactor is NADPH. Mg(2+) is required as a cofactor.

It localises to the cytoplasm. It carries out the reaction isopentenyl diphosphate = dimethylallyl diphosphate. In terms of biological role, involved in the biosynthesis of isoprenoids. Catalyzes the 1,3-allylic rearrangement of the homoallylic substrate isopentenyl (IPP) to its allylic isomer, dimethylallyl diphosphate (DMAPP). This is Isopentenyl-diphosphate delta-isomerase from Rickettsia canadensis (strain McKiel).